Reading from the N-terminus, the 834-residue chain is MGKNRKSKRQLIRDEKRAKKRGHENAEEEVRDAKRQRRTDGDEEHNADFIPLDGGNGDIPGFVIDTVGDKRRAHKYEGGEVEAEINGHGGDGGGGGGPGSFEREFFGMLAEEEQEYFRHADELLELNDFPSEEEKTIFLANVYKEAKGKELKLASSQSCSRLMERLILLSNTKQKKSMFDAFSGHFISLVTHRFASHCCEKLFLQSAPVVTQELAGEVPEEVPVEGQEEEELTENQKMSMEDLFLLTLDEFEEHLSFLLSDRYGSHALRVLLLVLAGRPLNQAGVKSLLQGKSKEYVTVEGAAANASELISQTRTVPSSFTAAIQKIIVDSTANLDGAALRVLAKHPTGNPTLQLLLDLELSMAPKGKKKAKKGEEEERQEEPVKETLLEKLVPGAPASFAEETSPACEFVNSMVYDPIGSRLLETLITHCPGKVFKGLHAHIFGPRIQSFLRNDIASYPAIKVLNRLSKEDLADAVEKSLPEFGALLEKGRLNVVRTYFERCHVRNATAQLDQLLQALTKACNNNWKHIVPKLCPLEEENEEDKSKEKKFQPAEVKNKTALLSHGCQIVSTLLSIPGNPAKAMQTSLLALPADKILRMATLNAHTAGIVTKALSTPPQLPHFHKLFVAAMLPNIIDMALTHHGNPIVCSIITMASKGDKDVPVVPFHLKENVMAKLEQRESQLRESWLGRNVWRSWKGDLWSNRRHDWVRWAKETNPEELRLAAAAGGAKTLEKQEEALKKRTEALQEEAFPEEMEEDQPEESEPVKVKKEKKEKKEKKEKKEKKEKKEKKEKKEKKEKKEKKEKKEKKEKKEKKEKKEKKPKVEEDAMEIDG.

Residues 1-10 are compositionally biased toward basic residues; that stretch reads MGKNRKSKRQ. The tract at residues 1–54 is disordered; it reads MGKNRKSKRQLIRDEKRAKKRGHENAEEEVRDAKRQRRTDGDEEHNADFIPLDG. A compositionally biased stretch (basic and acidic residues) spans 38 to 47; that stretch reads RTDGDEEHNA. 4 Pumilio repeats span residues 145 to 180, 181 to 216, 250 to 290, and 630 to 666; these read EAKGKELKLASSQSCSRLMERLILLSNTKQKKSMFD, AFSGHFISLVTHRFASHCCEKLFLQSAPVVTQELAG, EFEE…SLLQ, and AMLPNIIDMALTHHGNPIVCSIITMASKGDKDVPVVP. Residues 749–764 show a composition bias toward acidic residues; it reads EEAFPEEMEEDQPEES. A disordered region spans residues 749–834; it reads EEAFPEEMEE…VEEDAMEIDG (86 aa). Positions 770–822 are enriched in basic residues; the sequence is KKEKKEKKEKKEKKEKKEKKEKKEKKEKKEKKEKKEKKEKKEKKEKKEKKEKK.

It belongs to the NOP9 family.

It is found in the nucleus. It localises to the nucleolus. Functionally, RNA-binding nucleolar protein required for pre-rRNA processing. Involved in production of 18S rRNA and assembly of small ribosomal subunit. This chain is Nucleolar protein 9 (NOP9), found in Podospora anserina (strain S / ATCC MYA-4624 / DSM 980 / FGSC 10383) (Pleurage anserina).